We begin with the raw amino-acid sequence, 90 residues long: MKKKGGRKILGFMVKEEKEENRGSVEFQVFSFTNKIRRLASHLELHKKDFSSERGLRILLGKRRRLLAYLAKKNRVRYKKLISQLNIREQ.

Belongs to the universal ribosomal protein uS15 family. In terms of assembly, part of the 30S ribosomal subunit.

Its subcellular location is the plastid. It is found in the chloroplast. This chain is Small ribosomal subunit protein uS15c (rps15-A), found in Lolium perenne (Perennial ryegrass).